The sequence spans 129 residues: M-zodatoxin-Lt8g (129 aa).

An N-terminal signal peptide occupies residues 1–20 (MKYFVVALALVAAFACIAES). Residues 21–60 (KPAESEHELAEVEEENELADLEDAVWLEHLADLSDLEEAR) constitute a propeptide that is removed on maturation. Positions 57 to 60 (EEAR) match the Processing quadruplet motif motif.

Cleavage of the propeptide depends on the processing quadruplet motif (XXXR, with at least one of X being E). In terms of tissue distribution, expressed by the venom gland.

It localises to the secreted. Its function is as follows. Insecticidal, cytolytic and antimicrobial peptide. Has insecticidal activity against the flesh fly S.carnaria. Has antibacterial activity against the Gram-negative bacteria E.coli. Forms voltage-dependent, ion-permeable channels in membranes. At high concentration causes cell membrane lysis. This Lachesana tarabaevi (Spider) protein is M-zodatoxin-Lt8g (cit 1-8).